A 168-amino-acid chain; its full sequence is Large ribosomal subunit protein uL10 (168 aa).

The protein belongs to the universal ribosomal protein uL10 family. As to quaternary structure, part of the ribosomal stalk of the 50S ribosomal subunit. The N-terminus interacts with L11 and the large rRNA to form the base of the stalk. The C-terminus forms an elongated spine to which L12 dimers bind in a sequential fashion forming a multimeric L10(L12)X complex.

Its function is as follows. Forms part of the ribosomal stalk, playing a central role in the interaction of the ribosome with GTP-bound translation factors. This chain is Large ribosomal subunit protein uL10, found in Pediococcus pentosaceus (strain ATCC 25745 / CCUG 21536 / LMG 10740 / 183-1w).